The sequence spans 140 residues: Phosphoribosyl-AMP cyclohydrolase (140 aa).

D78 contacts Mg(2+). C79 provides a ligand contact to Zn(2+). Residues D80 and D82 each contribute to the Mg(2+) site. Zn(2+) contacts are provided by C96 and C103.

Belongs to the PRA-CH family. In terms of assembly, homodimer. It depends on Mg(2+) as a cofactor. Requires Zn(2+) as cofactor.

The protein localises to the cytoplasm. The enzyme catalyses 1-(5-phospho-beta-D-ribosyl)-5'-AMP + H2O = 1-(5-phospho-beta-D-ribosyl)-5-[(5-phospho-beta-D-ribosylamino)methylideneamino]imidazole-4-carboxamide. Its pathway is amino-acid biosynthesis; L-histidine biosynthesis; L-histidine from 5-phospho-alpha-D-ribose 1-diphosphate: step 3/9. In terms of biological role, catalyzes the hydrolysis of the adenine ring of phosphoribosyl-AMP. This is Phosphoribosyl-AMP cyclohydrolase from Ralstonia pickettii (strain 12J).